A 211-amino-acid chain; its full sequence is 3-demethoxyubiquinol 3-hydroxylase (211 aa).

6 residues coordinate Fe cation: glutamate 60, glutamate 90, histidine 93, glutamate 142, glutamate 174, and histidine 177.

The protein belongs to the COQ7 family. Fe cation serves as cofactor.

Its subcellular location is the cell membrane. It catalyses the reaction a 5-methoxy-2-methyl-3-(all-trans-polyprenyl)benzene-1,4-diol + AH2 + O2 = a 3-demethylubiquinol + A + H2O. Its pathway is cofactor biosynthesis; ubiquinone biosynthesis. Catalyzes the hydroxylation of 2-nonaprenyl-3-methyl-6-methoxy-1,4-benzoquinol during ubiquinone biosynthesis. In Acinetobacter baylyi (strain ATCC 33305 / BD413 / ADP1), this protein is 3-demethoxyubiquinol 3-hydroxylase.